The chain runs to 969 residues: Activity-dependent neuroprotective protein a (969 aa).

A C2H2-type 1 zinc finger spans residues 74–97; it reads FCCSDCPFASKYFSAYKNHFRNVH. The C2H2-type 2; atypical zinc-finger motif lies at 107–129; the sequence is LNCSYCTYSGNKRTLETHVRLFH. C2H2-type zinc fingers lie at residues 169–192 and 221–244; these read YYCK…YREH and IHCK…IEFH. The C2H2-type 5; atypical zinc finger occupies 401 to 423; the sequence is KICTICNELFPESAYSAHFEKEH. A C2H2-type 6; atypical zinc finger spans residues 443–464; the sequence is SKCLYCNRYLPSDSLLNHMLVH. The C2H2-type 7 zinc finger occupies 466–489; it reads LSCPHCHSTFHEVEKIVAHNRLAH. Residues 583–608 form a C2H2-type 8; atypical zinc finger; sequence TLCPLCFTILKGPISDALAHHLRDSH. The C2H2-type 9; atypical zinc finger occupies 623–647; sequence YKCIHCLGVYTSNMTASTITLHLVH. The segment at 659 to 689 is disordered; the sequence is KPITTGLRSPGAGSLKRELVTPDPSDPKRRK. Positions 732–774 form a DNA-binding region, homeobox; that stretch reads AYFNRHPYPSQREVEKLAASLWLWKSDVASHFGNHRRLCDRDF. Residues 911-949 form a disordered region; sequence DVRANRSSPRVGPKVLDGSVSSSSPDEATWSGNMSSEES. Positions 929–946 are enriched in polar residues; sequence SVSSSSPDEATWSGNMSS.

As to quaternary structure, interacts with catenin beta-1/ctnnb1.

Its subcellular location is the nucleus. Functionally, may be involved in transcriptional regulation. Positively modulates wnt-beta-catenin/ctnnb1 signaling. Required for embryonic neurogenesis. Required for progression through late erythroid differentiation. The chain is Activity-dependent neuroprotective protein a from Danio rerio (Zebrafish).